A 169-amino-acid polypeptide reads, in one-letter code: Succinate dehydrogenase cytochrome b560 subunit, mitochondrial (169 aa).

The N-terminal 29 residues, 1 to 29 (MAALLLRHVGRHCLRAHLSPQLCIRNAVP), are a transit peptide targeting the mitochondrion. Residues 30-62 (LGTTAKEEMERFWSKNTTLNRPLSPHISIYGWS) are Mitochondrial matrix-facing. Residues 63–92 (LPMAMSICHRGTGIALSAGVSLFGLSALLV) form a helical membrane-spanning segment. Over 93–112 (PGSFESHLEFVKSLCLGPAL) the chain is Mitochondrial intermembrane. A helical membrane pass occupies residues 113-137 (IHTAKFALVFPLMYHTWNGIRHLMW). Residue histidine 127 participates in heme b binding. Topologically, residues 138–144 (DLGKGLT) are mitochondrial matrix. The chain crosses the membrane as a helical span at residues 145–166 (ISQLHQSGVAVLVLTVLSSVGL). Topologically, residues 167–169 (AAM) are mitochondrial intermembrane.

It belongs to the cytochrome b560 family. Component of complex II composed of four subunits: the flavoprotein (FP) SDHA, iron-sulfur protein (IP) SDHB, and a cytochrome b560 composed of SDHC and SDHD. Heme b is required as a cofactor. The N-terminus is blocked.

The protein localises to the mitochondrion inner membrane. The protein operates within carbohydrate metabolism; tricarboxylic acid cycle. Its function is as follows. Membrane-anchoring subunit of succinate dehydrogenase (SDH) that is involved in complex II of the mitochondrial electron transport chain and is responsible for transferring electrons from succinate to ubiquinone (coenzyme Q). SDH also oxidizes malate to the non-canonical enol form of oxaloacetate, enol-oxaloacetate. Enol-oxaloacetate, which is a potent inhibitor of the succinate dehydrogenase activity, is further isomerized into keto-oxaloacetate. This chain is Succinate dehydrogenase cytochrome b560 subunit, mitochondrial (SDHC), found in Bos taurus (Bovine).